A 139-amino-acid chain; its full sequence is Trafficking protein particle complex subunit 2-like protein (139 aa).

It belongs to the TRAPP small subunits family. Sedlin subfamily. In terms of assembly, component of the multisubunit TRAPP (transport protein particle) complex, which includes at least TRAPPC2, TRAPPC2L, TRAPPC3, TRAPPC3L, TRAPPC4, TRAPPC5, TRAPPC8, TRAPPC9, TRAPPC10, TRAPPC11 and TRAPPC12. Interacts with the heterodimer TRAPPC3-TRAPPC6A.

It localises to the cytoplasm. The protein resides in the perinuclear region. The protein localises to the endoplasmic reticulum. It is found in the golgi apparatus. Its function is as follows. May play a role in vesicular transport from endoplasmic reticulum to Golgi. This is Trafficking protein particle complex subunit 2-like protein (TRAPPC2L) from Bos taurus (Bovine).